The chain runs to 292 residues: CCR4-NOT transcription complex subunit 8 (292 aa).

A divalent metal cation contacts are provided by Asp-40, Glu-42, Asp-161, and Asp-230.

It belongs to the CAF1 family. In terms of assembly, component of the CCR4-NOT complex; distinct complexes seem to exist that differ in the participation of probably mutually exclusive catalytic subunits; the complex contains two deadenylase subunits, CNOT6 or CNOT6L, and CNOT7 or CNOT8. In the complex interacts directly with CNOT1. Interacts with BTG1, BTG2 and TOB1. Interacts with BTG4.

Its subcellular location is the cytoplasm. The protein localises to the nucleus. It carries out the reaction Exonucleolytic cleavage of poly(A) to 5'-AMP.. Its function is as follows. Has 3'-5' poly(A) exoribonuclease activity for synthetic poly(A) RNA substrate. Its function seems to be partially redundant with that of CNOT7. Catalytic component of the CCR4-NOT complex which is linked to various cellular processes including bulk mRNA degradation, miRNA-mediated repression, translational repression during translational initiation and general transcription regulation. During miRNA-mediated repression the complex also seems to act as translational repressor during translational initiation. Additional complex functions may be a consequence of its influence on mRNA expression. Associates with members of the BTG family such as TOB1 and BTG2 and is required for their anti-proliferative activity. This Homo sapiens (Human) protein is CCR4-NOT transcription complex subunit 8 (CNOT8).